Reading from the N-terminus, the 69-residue chain is ATP synthase F(0) complex subunit e, mitochondrial (69 aa).

Lys-34 carries the N6-acetyllysine modification. The residue at position 66 (Ser-66) is a Phosphoserine.

It belongs to the ATPase e subunit family. In terms of assembly, component of the ATP synthase complex composed at least of ATP5F1A/subunit alpha, ATP5F1B/subunit beta, ATP5MC1/subunit c (homooctomer), MT-ATP6/subunit a, MT-ATP8/subunit 8, ATP5ME/subunit e, ATP5MF/subunit f, ATP5MG/subunit g, ATP5MK/subunit k, ATP5MJ/subunit j, ATP5F1C/subunit gamma, ATP5F1D/subunit delta, ATP5F1E/subunit epsilon, ATP5PF/subunit F6, ATP5PB/subunit b, ATP5PD/subunit d, ATP5PO/subunit OSCP. ATP synthase complex consists of a soluble F(1) head domain (subunits alpha(3) and beta(3)) - the catalytic core - and a membrane F(0) domain - the membrane proton channel (subunits c, a, 8, e, f, g, k and j). These two domains are linked by a central stalk (subunits gamma, delta, and epsilon) rotating inside the F1 region and a stationary peripheral stalk (subunits F6, b, d, and OSCP).

It localises to the mitochondrion. It is found in the mitochondrion inner membrane. Subunit e, of the mitochondrial membrane ATP synthase complex (F(1)F(0) ATP synthase or Complex V) that produces ATP from ADP in the presence of a proton gradient across the membrane which is generated by electron transport complexes of the respiratory chain. ATP synthase complex consist of a soluble F(1) head domain - the catalytic core - and a membrane F(1) domain - the membrane proton channel. These two domains are linked by a central stalk rotating inside the F(1) region and a stationary peripheral stalk. During catalysis, ATP synthesis in the catalytic domain of F(1) is coupled via a rotary mechanism of the central stalk subunits to proton translocation. In vivo, can only synthesize ATP although its ATP hydrolase activity can be activated artificially in vitro. Part of the complex F(0) domain. This chain is ATP synthase F(0) complex subunit e, mitochondrial, found in Homo sapiens (Human).